The primary structure comprises 126 residues: uncharacterized protein (126 aa).

The 123-residue stretch at 4–126 (RIDHTGIMVR…DGEWIEFFQR (123 aa)) folds into the VOC domain. A divalent metal cation-binding residues include His7, Glu42, His74, and Glu122.

It belongs to the glyoxalase I family.

This is an uncharacterized protein from Bacillus subtilis (strain 168).